We begin with the raw amino-acid sequence, 128 residues long: Small ribosomal subunit protein uS12 (128 aa).

The segment at 1 to 29 (MPTINQLIRKGREPKERKSKSPALMGNPQ) is disordered. Position 89 is a 3-methylthioaspartic acid (Asp-89). Residues 106–128 (GVEGRRQGRSKYGAKRPKEGGKK) are disordered.

This sequence belongs to the universal ribosomal protein uS12 family. In terms of assembly, part of the 30S ribosomal subunit. Contacts proteins S8 and S17. May interact with IF1 in the 30S initiation complex.

In terms of biological role, with S4 and S5 plays an important role in translational accuracy. Interacts with and stabilizes bases of the 16S rRNA that are involved in tRNA selection in the A site and with the mRNA backbone. Located at the interface of the 30S and 50S subunits, it traverses the body of the 30S subunit contacting proteins on the other side and probably holding the rRNA structure together. The combined cluster of proteins S8, S12 and S17 appears to hold together the shoulder and platform of the 30S subunit. This chain is Small ribosomal subunit protein uS12, found in Dictyoglomus turgidum (strain DSM 6724 / Z-1310).